Consider the following 142-residue polypeptide: Large ribosomal subunit protein uL11 (142 aa).

It belongs to the universal ribosomal protein uL11 family. Part of the ribosomal stalk of the 50S ribosomal subunit. Interacts with L10 and the large rRNA to form the base of the stalk. L10 forms an elongated spine to which L12 dimers bind in a sequential fashion forming a multimeric L10(L12)X complex. Post-translationally, one or more lysine residues are methylated.

Its function is as follows. Forms part of the ribosomal stalk which helps the ribosome interact with GTP-bound translation factors. The polypeptide is Large ribosomal subunit protein uL11 (Buchnera aphidicola subsp. Acyrthosiphon pisum (strain APS) (Acyrthosiphon pisum symbiotic bacterium)).